Reading from the N-terminus, the 2290-residue chain is Armadillo repeat-containing X-linked protein 4 (2290 aa).

Residues 7-24 (VGWVTAGLVIWAGTCYYI) traverse the membrane as a helical segment. Disordered stretches follow at residues 517–549 (QGEALPNTRGKARGKAKAKCKTGPGMDMKTCTQ), 564–583 (SRVDGRGNPNATSKAGTKAD), 967–988 (KVRGNSNAVPKAEAGADTVGSA), 1014–1087 (AVPK…ACRK), 1302–1430 (GSWA…ANSG), 1521–1715 (GSWG…RSED), 1911–1931 (SNTFRSKSGKDASFESGAGDN), and 1954–1973 (NENTSEDKSAPKAKAKKSSE). The segment covering 526–536 (GKARGKAKAKC) has biased composition (basic residues). Polar residues predominate over residues 1073-1087 (TSESEGGSGTQACRK). Composition is skewed to gly residues over residues 1328–1341 (SWAGAGGQASGGSM) and 1403–1414 (AGAGGQAGGGSK). The segment covering 1419–1430 (DQSSGRSWANSG) has biased composition (polar residues). Positions 1521 to 1535 (GSWGGASGQDVGGSR) are enriched in gly residues. Over residues 1537–1558 (GPTNQSSAGSWDSPGSQVSGSC) the composition is skewed to polar residues. Gly residues-rich tracts occupy residues 1581–1598 (IGGGFWPGAGDQTGGGSR) and 1609–1623 (GSWGVAGGQVLGGAR). The segment covering 1628 to 1645 (DQSSGGSWAGTGNQSSGR) has biased composition (polar residues). The span at 1674-1687 (GAGSQASGESWAGS) shows a compositional bias: low complexity. 4 ARM repeats span residues 2031–2071 (RCKH…NSAD), 2073–2112 (SYSHEVVRNVGGISVIESLLNNPYPSVRQKALNALNNISV), 2153–2192 (ITSEYQHMVTNYISEFLRLLTVGSGETKDHVLGMLLNFSK), and 2194–2234 (PSMT…NINY).

It belongs to the eutherian X-chromosome-specific Armcx family.

Its subcellular location is the membrane. This chain is Armadillo repeat-containing X-linked protein 4 (ARMCX4), found in Homo sapiens (Human).